Reading from the N-terminus, the 1434-residue chain is Probable ATP-dependent RNA helicase spindle-E (1434 aa).

The 168-residue stretch at 125 to 292 (LAAINAHPVI…FATTNSIPPV (168 aa)) folds into the Helicase ATP-binding domain. Residue 138-145 (GETGCGKT) coordinates ATP. Positions 238–241 (DEVH) match the DEAH box motif. Residues 339 to 526 (KIIVIIDNME…NSVLKAKVLN (188 aa)) form the Helicase C-terminal domain. The 64-residue stretch at 938-1001 (AGDITKGMMV…RLMPRELTEQ (64 aa)) folds into the Tudor domain.

The protein belongs to the DEAD box helicase family. DEAH subfamily.

Its subcellular location is the cytoplasm. The enzyme catalyses ATP + H2O = ADP + phosphate + H(+). In terms of biological role, probable ATP-binding RNA helicase which plays a central role during spermatogenesis and oogenesis by repressing transposable elements and preventing their mobilization, which is essential for the germline integrity. Acts via the piRNA metabolic process, which mediates the repression of transposable elements during meiosis by forming complexes composed of piRNAs and Piwi and govern the methylation and subsequent repression of transposons. Involved in the repression of LTR retrotransposon copia. Also involved in telomere regulation by repressing specialized telomeric retroelements HeT-A, TAHRE, and TART; Drosophila telomeres being maintained by transposition of specialized telomeric retroelements. Involved in telomeric trans-silencing, a repression mechanism by which a transposon or a transgene inserted in subtelomeric heterochromatin has the capacity to repress in trans in the female germline, a homologous transposon, or transgene located in euchromatin. Involved in the repression of testis-expressed Stellate genes by the homologous Su(Ste) repeats. Required for anteroposterior and dorsoventral axis formation during oogenesis. This Drosophila sechellia (Fruit fly) protein is Probable ATP-dependent RNA helicase spindle-E (spn-E).